We begin with the raw amino-acid sequence, 320 residues long: o-succinylbenzoate synthase (320 aa).

K133 serves as the catalytic Proton donor. Residues D161, E190, and D213 each contribute to the Mg(2+) site. The Proton acceptor role is filled by K235.

The protein belongs to the mandelate racemase/muconate lactonizing enzyme family. MenC type 1 subfamily. The cofactor is a divalent metal cation.

The enzyme catalyses (1R,6R)-6-hydroxy-2-succinyl-cyclohexa-2,4-diene-1-carboxylate = 2-succinylbenzoate + H2O. It participates in quinol/quinone metabolism; 1,4-dihydroxy-2-naphthoate biosynthesis; 1,4-dihydroxy-2-naphthoate from chorismate: step 4/7. Its pathway is quinol/quinone metabolism; menaquinone biosynthesis. Converts 2-succinyl-6-hydroxy-2,4-cyclohexadiene-1-carboxylate (SHCHC) to 2-succinylbenzoate (OSB). The protein is o-succinylbenzoate synthase of Shigella boydii serotype 18 (strain CDC 3083-94 / BS512).